We begin with the raw amino-acid sequence, 658 residues long: MAEAAAAAGGTGLGAGASYGSAADRDRDPDPDRAGRRLRVLSGHLLGRPREALSTNECKARRAASAATAAPTATPAAQESGTIPKKRQEVMKWNGWGYNDSKFIFNKKGQIELTGKRYPLSGMGLPTFKEWIQNTLGVNVEHKTTSKASLNPSDTPPSVVNEDFLHDLKETNISYSQEADDRVFRAHGHCLHEIFLLREGMFERIPDIVLWPTCHDDVVKIVNLACKYNLCIIPIGGGTSVSYGLMCPADETRTIISLDTSQMNRILWVDENNLTAHVEAGITGQELERQLKESGYCTGHEPDSLEFSTVGGWVSTRASGMKKNIYGNIEDLVVHIKMVTPRGIIEKSCQGPRMSTGPDIHHFIMGSEGTLGVITEATIKIRPVPEYQKYGSVAFPNFEQGVACLREIAKQRCAPASIRLMDNKQFQFGHALKPQVSSIFTSFLDGLKKFYITKFKGFDPNQLSVATLLFEGDREKVLQHEKQVYDIAAKFGGLAAGEDNGQRGYLLTYVIAYIRDLALEYYVLGESFETSAPWDRVVDLCRNVKERITRECKEKGVQFAPFSTCRVTQTYDAGACIYFYFAFNYRGISDPLTVFEQTEAAAREEILANGGSLSHHHGVGKLRKQWLKESISDVGFGMLKSVKEYVDPNNIFGNRNLL.

2 disordered regions span residues 1 to 41 (MAEA…LRVL) and 63 to 86 (AASA…IPKK). A peroxisome-targeting transit peptide spans 1–58 (MAEAAAAAGGTGLGAGASYGSAADRDRDPDPDRAGRRLRVLSGHLLGRPREALSTNEC). Residues 23 to 35 (ADRDRDPDPDRAG) are compositionally biased toward basic and acidic residues. Positions 63-77 (AASAATAAPTATPAA) are enriched in low complexity. A Phosphoserine modification is found at S65. Residue T74 is modified to Phosphothreonine. N6-acetyllysine is present on K102. Residues 202–384 (FERIPDIVLW…TEATIKIRPV (183 aa)) form the FAD-binding PCMH-type domain. FAD-binding positions include 234-240 (PIGGGTS), 303-309 (DSLEFST), and 316-319 (TRAS). K347 carries the post-translational modification N6-acetyllysine. 368–374 (EGTLGVI) serves as a coordination point for FAD. R515 is a binding site for substrate. Residue Y578 is the Proton donor/acceptor of the active site. Important for enzyme activity regions lie at residues 615–617 (HHH) and 654–658 (NRNLL).

This sequence belongs to the FAD-binding oxidoreductase/transferase type 4 family. Homodimer. FAD is required as a cofactor.

It is found in the peroxisome membrane. The protein localises to the peroxisome. It carries out the reaction a long chain fatty alcohol + a 1-acylglycerone 3-phosphate = a 1-O-alkylglycerone 3-phosphate + a long-chain fatty acid + H(+). The enzyme catalyses hexadecan-1-ol + 1-hexadecanoylglycerone 3-phosphate = 1-O-hexadecylglycerone 3-phosphate + hexadecanoate + H(+). It catalyses the reaction 1-hexadecanoylglycerone 3-phosphate + a long-chain fatty acid = a 1-acylglycerone 3-phosphate + hexadecanoate. It functions in the pathway glycerolipid metabolism; ether lipid biosynthesis. Functionally, catalyzes the exchange of the acyl chain in acyl-dihydroxyacetonephosphate (acyl-DHAP) for a long chain fatty alcohol, yielding the first ether linked intermediate, i.e. alkyl-dihydroxyacetonephosphate (alkyl-DHAP), in the pathway of ether lipid biosynthesis. This Homo sapiens (Human) protein is Alkyldihydroxyacetonephosphate synthase, peroxisomal (AGPS).